The chain runs to 84 residues: Large ribosomal subunit protein bL27 (84 aa).

The disordered stretch occupies residues 1–21 (MAHKKGAGSTKNGRDSKPKML).

It belongs to the bacterial ribosomal protein bL27 family.

The protein is Large ribosomal subunit protein bL27 of Dehalococcoides mccartyi (strain ATCC BAA-2100 / JCM 16839 / KCTC 5957 / BAV1).